The following is a 78-amino-acid chain: Large ribosomal subunit protein bL28 (78 aa).

This sequence belongs to the bacterial ribosomal protein bL28 family.

The chain is Large ribosomal subunit protein bL28 from Acinetobacter baylyi (strain ATCC 33305 / BD413 / ADP1).